Reading from the N-terminus, the 577-residue chain is Proline--tRNA ligase (577 aa).

It belongs to the class-II aminoacyl-tRNA synthetase family. ProS type 1 subfamily. In terms of assembly, homodimer.

It is found in the cytoplasm. The enzyme catalyses tRNA(Pro) + L-proline + ATP = L-prolyl-tRNA(Pro) + AMP + diphosphate. Its function is as follows. Catalyzes the attachment of proline to tRNA(Pro) in a two-step reaction: proline is first activated by ATP to form Pro-AMP and then transferred to the acceptor end of tRNA(Pro). As ProRS can inadvertently accommodate and process non-cognate amino acids such as alanine and cysteine, to avoid such errors it has two additional distinct editing activities against alanine. One activity is designated as 'pretransfer' editing and involves the tRNA(Pro)-independent hydrolysis of activated Ala-AMP. The other activity is designated 'posttransfer' editing and involves deacylation of mischarged Ala-tRNA(Pro). The misacylated Cys-tRNA(Pro) is not edited by ProRS. The sequence is that of Proline--tRNA ligase from Helicobacter pylori (strain HPAG1).